The following is a 69-amino-acid chain: Protein translocase subunit SecE (69 aa).

Residues 43 to 63 traverse the membrane as a helical segment; it reads VAGAGILVIGFVGFLIYVLLT.

The protein belongs to the SecE/SEC61-gamma family. In terms of assembly, component of the Sec protein translocase complex. Heterotrimer consisting of SecY (alpha), SecG (beta) and SecE (gamma) subunits. The heterotrimers can form oligomers, although 1 heterotrimer is thought to be able to translocate proteins. Interacts with the ribosome. May interact with SecDF, and other proteins may be involved.

It is found in the cell membrane. Essential subunit of the Sec protein translocation channel SecYEG. Clamps together the 2 halves of SecY. May contact the channel plug during translocation. The polypeptide is Protein translocase subunit SecE (Methanococcoides burtonii (strain DSM 6242 / NBRC 107633 / OCM 468 / ACE-M)).